Consider the following 301-residue polypeptide: N-acetylmuramic acid 6-phosphate etherase (301 aa).

The SIS domain maps to Ile57–Lys220. Residue Glu85 is the Proton donor of the active site. Glu116 is an active-site residue.

It belongs to the GCKR-like family. MurNAc-6-P etherase subfamily. Homodimer.

It carries out the reaction N-acetyl-D-muramate 6-phosphate + H2O = N-acetyl-D-glucosamine 6-phosphate + (R)-lactate. It functions in the pathway amino-sugar metabolism; 1,6-anhydro-N-acetylmuramate degradation. The protein operates within amino-sugar metabolism; N-acetylmuramate degradation. Its pathway is cell wall biogenesis; peptidoglycan recycling. Functionally, specifically catalyzes the cleavage of the D-lactyl ether substituent of MurNAc 6-phosphate, producing GlcNAc 6-phosphate and D-lactate. Together with AnmK, is also required for the utilization of anhydro-N-acetylmuramic acid (anhMurNAc) either imported from the medium or derived from its own cell wall murein, and thus plays a role in cell wall recycling. The polypeptide is N-acetylmuramic acid 6-phosphate etherase (Photorhabdus laumondii subsp. laumondii (strain DSM 15139 / CIP 105565 / TT01) (Photorhabdus luminescens subsp. laumondii)).